The sequence spans 96 residues: Large ribosomal subunit protein bL27 (96 aa).

A propeptide spanning residues 1 to 9 (MLRLDLQFF) is cleaved from the precursor.

The protein belongs to the bacterial ribosomal protein bL27 family. In terms of processing, the N-terminus is cleaved by ribosomal processing cysteine protease Prp.

This is Large ribosomal subunit protein bL27 from Anoxybacillus flavithermus (strain DSM 21510 / WK1).